A 657-amino-acid polypeptide reads, in one-letter code: UvrABC system protein B (657 aa).

A Helicase ATP-binding domain is found at 25–182 (NSIKSNNRAQ…KKLIEIQYER (158 aa)). 38 to 45 (GVTGSGKT) contacts ATP. Positions 91-114 (YYDYYQPEAYVPQTDTFIEKDASI) match the Beta-hairpin motif. The Helicase C-terminal domain occupies 429-595 (QIDDLYGEIN…TIIKDVRDII (167 aa)). Residues 621–656 (DKLIKDLTEEMLLAAKNLQFERAAELRDIINEIKDG) enclose the UVR domain.

It belongs to the UvrB family. As to quaternary structure, forms a heterotetramer with UvrA during the search for lesions. Interacts with UvrC in an incision complex.

The protein resides in the cytoplasm. Its function is as follows. The UvrABC repair system catalyzes the recognition and processing of DNA lesions. A damage recognition complex composed of 2 UvrA and 2 UvrB subunits scans DNA for abnormalities. Upon binding of the UvrA(2)B(2) complex to a putative damaged site, the DNA wraps around one UvrB monomer. DNA wrap is dependent on ATP binding by UvrB and probably causes local melting of the DNA helix, facilitating insertion of UvrB beta-hairpin between the DNA strands. Then UvrB probes one DNA strand for the presence of a lesion. If a lesion is found the UvrA subunits dissociate and the UvrB-DNA preincision complex is formed. This complex is subsequently bound by UvrC and the second UvrB is released. If no lesion is found, the DNA wraps around the other UvrB subunit that will check the other stand for damage. This Clostridium beijerinckii (strain ATCC 51743 / NCIMB 8052) (Clostridium acetobutylicum) protein is UvrABC system protein B.